A 302-amino-acid polypeptide reads, in one-letter code: Methylsterol monooxygenase erg25A (302 aa).

An N-linked (GlcNAc...) asparagine glycan is attached at Asn-5. A run of 3 helical transmembrane segments spans residues 47–67 (NIVA…IYFS), 105–125 (YILL…HPMM), and 132–152 (FTIP…FFLL). Residues 147–283 (IIFFLLEDTY…FRHWDVLMGT (137 aa)) form the Fatty acid hydroxylase domain. Positions 161–165 (HRAMH) match the Histidine box-1 motif. Residues 174–178 (HRIHH) carry the Histidine box-2 motif. The helical transmembrane segment at 193–213 (PWETLLLGLGTIGPPLLLALM) threads the bilayer. The Histidine box-3 motif lies at 258–264 (WHDDHHR). The N-linked (GlcNAc...) asparagine glycan is linked to Asn-269.

This sequence belongs to the sterol desaturase family. Fe cation serves as cofactor.

It is found in the endoplasmic reticulum membrane. The protein operates within steroid metabolism; ergosterol biosynthesis. Functionally, sterol-C4-methyl oxidase; part of the third module of ergosterol biosynthesis pathway that includes the late steps of the pathway. Erg25A is a catalytic component of the C-4 demethylation complex that catalyzes the conversion of 4,4-dimethylfecosterol into fecosterol via 4-methylfecosterol. The third module or late pathway involves the ergosterol synthesis itself through consecutive reactions that mainly occur in the endoplasmic reticulum (ER) membrane. Firstly, the squalene synthase erg9 catalyzes the condensation of 2 farnesyl pyrophosphate moieties to form squalene, which is the precursor of all steroids. Squalene synthase is crucial for balancing the incorporation of farnesyl diphosphate (FPP) into sterol and nonsterol isoprene synthesis. Secondly, squalene is converted into lanosterol by the consecutive action of the squalene epoxidase erg1 and the lanosterol synthase erg7. Then, the delta(24)-sterol C-methyltransferase erg6 methylates lanosterol at C-24 to produce eburicol. Eburicol is the substrate of the sterol 14-alpha demethylase encoded by cyp51A and cyp51B, to yield 4,4,24-trimethyl ergosta-8,14,24(28)-trienol. The C-14 reductase erg24 then reduces the C14=C15 double bond which leads to 4,4-dimethylfecosterol. A sequence of further demethylations at C-4, involving the C-4 demethylation complex containing the C-4 methylsterol oxidases erg25A or erg25B, the sterol-4-alpha-carboxylate 3-dehydrogenase erg26 and the 3-keto-steroid reductase erg27, leads to the production of fecosterol via 4-methylfecosterol. The C-8 sterol isomerase erg2 then catalyzes the reaction which results in unsaturation at C-7 in the B ring of sterols and thus converts fecosterol to episterol. The sterol-C5-desaturase erg3B then catalyzes the introduction of a C-5 double bond in the B ring to produce 5-dehydroepisterol. The 2 other sterol-C5-desaturases, erg3A and erg3C, seem to be less important in ergosterol biosynthesis. The C-22 sterol desaturase erg5 further converts 5-dehydroepisterol into ergosta-5,7,22,24(28)-tetraen-3beta-ol by forming the C-22(23) double bond in the sterol side chain. Finally, ergosta-5,7,22,24(28)-tetraen-3beta-ol is substrate of the C-24(28) sterol reductases erg4A and erg4B to produce ergosterol. Possible alternative sterol biosynthetic pathways might exist from fecosterol to ergosterol, depending on the activities of the erg3 isoforms. The chain is Methylsterol monooxygenase erg25A from Aspergillus fumigatus (strain ATCC MYA-4609 / CBS 101355 / FGSC A1100 / Af293) (Neosartorya fumigata).